An 88-amino-acid chain; its full sequence is Large ribosomal subunit protein bL27 (88 aa).

The tract at residues 1-21 (MAHKKGASSSRNGRDSNAKRL) is disordered.

This sequence belongs to the bacterial ribosomal protein bL27 family.

The protein is Large ribosomal subunit protein bL27 of Thermobifida fusca (strain YX).